Reading from the N-terminus, the 273-residue chain is Shikimate dehydrogenase (NADP(+)) (273 aa).

Residues 15–17 (SQS) and T62 contribute to the shikimate site. K66 functions as the Proton acceptor in the catalytic mechanism. Residue E78 participates in NADP(+) binding. Positions 87 and 102 each coordinate shikimate. NADP(+) contacts are provided by residues 127–131 (GAGGA), 151–156 (NRTVIK), and M215. Shikimate is bound at residue Y217. G239 is an NADP(+) binding site.

This sequence belongs to the shikimate dehydrogenase family. As to quaternary structure, homodimer.

The catalysed reaction is shikimate + NADP(+) = 3-dehydroshikimate + NADPH + H(+). It participates in metabolic intermediate biosynthesis; chorismate biosynthesis; chorismate from D-erythrose 4-phosphate and phosphoenolpyruvate: step 4/7. Involved in the biosynthesis of the chorismate, which leads to the biosynthesis of aromatic amino acids. Catalyzes the reversible NADPH linked reduction of 3-dehydroshikimate (DHSA) to yield shikimate (SA). This Chromobacterium violaceum (strain ATCC 12472 / DSM 30191 / JCM 1249 / CCUG 213 / NBRC 12614 / NCIMB 9131 / NCTC 9757 / MK) protein is Shikimate dehydrogenase (NADP(+)).